A 253-amino-acid chain; its full sequence is Pimeloyl-[acyl-carrier protein] methyl ester esterase (253 aa).

Substrate contacts are provided by residues W18, 78–79 (SL), and 139–143 (FLALD). S78 functions as the Nucleophile in the catalytic mechanism. Residues D203 and H231 contribute to the active site. H231 contacts substrate.

It belongs to the AB hydrolase superfamily. Carboxylesterase BioH family. Monomer.

It is found in the cytoplasm. It carries out the reaction 6-carboxyhexanoyl-[ACP] methyl ester + H2O = 6-carboxyhexanoyl-[ACP] + methanol + H(+). It functions in the pathway cofactor biosynthesis; biotin biosynthesis. In terms of biological role, the physiological role of BioH is to remove the methyl group introduced by BioC when the pimeloyl moiety is complete. It allows to synthesize pimeloyl-ACP via the fatty acid synthetic pathway through the hydrolysis of the ester bonds of pimeloyl-ACP esters. This is Pimeloyl-[acyl-carrier protein] methyl ester esterase from Xanthomonas oryzae pv. oryzae (strain MAFF 311018).